The following is a 528-amino-acid chain: GMP synthase [glutamine-hydrolyzing] (528 aa).

Residues 13–204 enclose the Glutamine amidotransferase type-1 domain; that stretch reads SILILDFGSQ…VYGISSCVAD (192 aa). C90 functions as the Nucleophile in the catalytic mechanism. Catalysis depends on residues H178 and E180. The GMPS ATP-PPase domain occupies 205–403; that stretch reads WTTETYIEET…LGLPDEIIKR (199 aa). Residue 232–238 coordinates ATP; sequence SGGVDSS.

As to quaternary structure, homodimer.

It catalyses the reaction XMP + L-glutamine + ATP + H2O = GMP + L-glutamate + AMP + diphosphate + 2 H(+). It functions in the pathway purine metabolism; GMP biosynthesis; GMP from XMP (L-Gln route): step 1/1. Functionally, catalyzes the synthesis of GMP from XMP. This Prochlorococcus marinus (strain MIT 9312) protein is GMP synthase [glutamine-hydrolyzing].